The following is a 179-amino-acid chain: MSSRVLTPDVVGIDALVHDHQTVLAKAEGGVVAVFANNAPAFYAVTPARLAELLALEEKLARPGSDVDLDDQLYQEPQAAPVAVPMGKFAMYPDWQPDADFIRLAALWGVALREPVTTEELASFIAYWQAEGKVFHHVQWQQKLARSLQIGRASNGGLPKRDVNTVSEPDSQIPPGFRG.

Residues 156–179 are disordered; sequence GGLPKRDVNTVSEPDSQIPPGFRG.

This sequence belongs to the DnaT family. As to quaternary structure, homooligomerizes. Interacts with PriB. Component of the replication restart primosome. Primosome assembly occurs via a 'hand-off' mechanism. PriA binds to replication forks, subsequently PriB then DnaT bind; DnaT then displaces ssDNA to generate the helicase loading substrate.

Functionally, involved in the restart of stalled replication forks, which reloads the replicative helicase on sites other than the origin of replication. Can function in multiple replication restart pathways. Displaces ssDNA from a PriB-ssDNA complex. Probably forms a spiral filament on ssDNA. This Escherichia coli O157:H7 protein is Replication restart protein DnaT.